A 140-amino-acid polypeptide reads, in one-letter code: MASVDFKTYVGQACRAAEEFVNVYYSTMDKRRRLLSRLYMGTATLVWNGNAVSGQESLSEFFEMLPSSEFQINVVDCQPVHDEATPSQTTVLVVICGTVKFEGNKQRDFNQNFILTAQASPSNTVWKIASDCFRFQDWAC.

Alanine 2 carries the N-acetylalanine modification. The 120-residue stretch at 16–135 (AAEEFVNVYY…WKIASDCFRF (120 aa)) folds into the NTF2 domain.

As to quaternary structure, heterodimer with NXF1. Forms a complex with RANGAP1, RANBP2/NUP358 and NXF1. Interacts (via NTF2 domain) with NXF1. Stabilizes the NTF2 domain of NXF1 by heterodimerization. The formation of NXF1-NXT1 heterodimers is required for the NXF1-mediated nuclear mRNA export. Preferentially binds Ran-GTP. Associates with NXF2, NXF3 and NXF5. Does not bind nucleoporins (NPC) directly, its association to NPC is mediated by NXF1.

The protein localises to the nucleus. It is found in the nucleus speckle. Its subcellular location is the cytoplasm. Functionally, stimulator of protein export for NES-containing proteins. Also plays a role in the nuclear export of U1 snRNA, tRNA, and mRNA. The NXF1-NXT1 heterodimer is involved in the export of HSP70 mRNA in conjunction with ALYREF/THOC4 and THOC5. The polypeptide is NTF2-related export protein 1 (NXT1) (Bos taurus (Bovine)).